A 380-amino-acid polypeptide reads, in one-letter code: Transaldolase (380 aa).

Residue Lys141 is the Schiff-base intermediate with substrate of the active site.

The protein belongs to the transaldolase family. Type 2 subfamily.

The protein localises to the cytoplasm. The catalysed reaction is D-sedoheptulose 7-phosphate + D-glyceraldehyde 3-phosphate = D-erythrose 4-phosphate + beta-D-fructose 6-phosphate. It functions in the pathway carbohydrate degradation; pentose phosphate pathway; D-glyceraldehyde 3-phosphate and beta-D-fructose 6-phosphate from D-ribose 5-phosphate and D-xylulose 5-phosphate (non-oxidative stage): step 2/3. Its function is as follows. Transaldolase is important for the balance of metabolites in the pentose-phosphate pathway. The chain is Transaldolase from Trichodesmium erythraeum (strain IMS101).